Here is a 387-residue protein sequence, read N- to C-terminus: Alkanesulfonate monooxygenase (387 aa).

The tract at residues 365-387 (HNSGPFGETVGNDYRPSRLASQS) is disordered.

The protein belongs to the SsuD family.

The enzyme catalyses an alkanesulfonate + FMNH2 + O2 = an aldehyde + FMN + sulfite + H2O + 2 H(+). Catalyzes the desulfonation of aliphatic sulfonates. The polypeptide is Alkanesulfonate monooxygenase (Bradyrhizobium diazoefficiens (strain JCM 10833 / BCRC 13528 / IAM 13628 / NBRC 14792 / USDA 110)).